An 880-amino-acid chain; its full sequence is Potassium transport protein 2 (880 aa).

N-linked (GlcNAc...) asparagine glycosylation occurs at N9. A run of 2 helical transmembrane segments spans residues 28 to 48 and 84 to 104; these read FVQD…LYGS and TILL…LTLF. The interval 157–182 is disordered; the sequence is MHRPVAPETKAEEAEHQENEKHHRHH. The segment covering 165-177 has biased composition (basic and acidic residues); the sequence is TKAEEAEHQENEK. Residues N239, N283, N293, N294, N321, N443, and N460 are each glycosylated (N-linked (GlcNAc...) asparagine). Residues 289 to 315 are compositionally biased toward polar residues; the sequence is HHLDNNSSISSHNPSLETANDGNQETV. Residues 289-344 are disordered; that stretch reads HHLDNNSSISSHNPSLETANDGNQETVSSSNSNYSTTRVDNDPHVASYSPQNSNFD. A compositionally biased stretch (low complexity) spans 316–325; that stretch reads SSSNSNYSTT. Helical transmembrane passes span 494 to 514, 571 to 591, 625 to 645, 684 to 704, 756 to 776, and 787 to 807; these read ILVV…LIFI, LIFL…WIMI, WVLF…FMVL, IAPA…YPIA, QLSH…IVEG, and FTLF…GLSL. Residues 857–880 form a disordered region; the sequence is REEEDYMRRHGKKNTNRADPVPSS.

It belongs to the TrkH potassium transport family.

Its subcellular location is the cell membrane. In terms of biological role, together with TRK1, defines the major, high-affinity potassium influx transport system. Involved in maintenance of the proper sodium/potassium ratio in the cell and in regulating the plasma membrane potential. The chain is Potassium transport protein 2 (trk2) from Schizosaccharomyces pombe (strain 972 / ATCC 24843) (Fission yeast).